The following is a 223-amino-acid chain: Thiamine-phosphate synthase (223 aa).

4-amino-2-methyl-5-(diphosphooxymethyl)pyrimidine-binding positions include 37–41 (QFREK) and Asp72. Mg(2+)-binding residues include Asp73 and Asp92. Ser110 contributes to the 4-amino-2-methyl-5-(diphosphooxymethyl)pyrimidine binding site. Residue 136–138 (TQS) coordinates 2-[(2R,5Z)-2-carboxy-4-methylthiazol-5(2H)-ylidene]ethyl phosphate. Lys139 lines the 4-amino-2-methyl-5-(diphosphooxymethyl)pyrimidine pocket. 2-[(2R,5Z)-2-carboxy-4-methylthiazol-5(2H)-ylidene]ethyl phosphate-binding positions include Gly168 and 188-189 (IS).

This sequence belongs to the thiamine-phosphate synthase family. It depends on Mg(2+) as a cofactor.

It catalyses the reaction 2-[(2R,5Z)-2-carboxy-4-methylthiazol-5(2H)-ylidene]ethyl phosphate + 4-amino-2-methyl-5-(diphosphooxymethyl)pyrimidine + 2 H(+) = thiamine phosphate + CO2 + diphosphate. It carries out the reaction 2-(2-carboxy-4-methylthiazol-5-yl)ethyl phosphate + 4-amino-2-methyl-5-(diphosphooxymethyl)pyrimidine + 2 H(+) = thiamine phosphate + CO2 + diphosphate. The enzyme catalyses 4-methyl-5-(2-phosphooxyethyl)-thiazole + 4-amino-2-methyl-5-(diphosphooxymethyl)pyrimidine + H(+) = thiamine phosphate + diphosphate. Its pathway is cofactor biosynthesis; thiamine diphosphate biosynthesis; thiamine phosphate from 4-amino-2-methyl-5-diphosphomethylpyrimidine and 4-methyl-5-(2-phosphoethyl)-thiazole: step 1/1. Its function is as follows. Condenses 4-methyl-5-(beta-hydroxyethyl)thiazole monophosphate (THZ-P) and 2-methyl-4-amino-5-hydroxymethyl pyrimidine pyrophosphate (HMP-PP) to form thiamine monophosphate (TMP). This is Thiamine-phosphate synthase from Streptococcus agalactiae serotype III (strain NEM316).